The chain runs to 58 residues: Large ribosomal subunit protein bL32 (58 aa).

It belongs to the bacterial ribosomal protein bL32 family.

This is Large ribosomal subunit protein bL32 from Staphylococcus aureus (strain NCTC 8325 / PS 47).